Reading from the N-terminus, the 147-residue chain is MVPISIIRNRVAKVAVGSAAVLGLAVGFQTPAVAAAPTATVTPSSGLSDGTVVKVAGAGLQAGTAYDVGQCAWVDTGVLACNPADFSSVTADANGSASTSLTVRRSFEGFLFDGTRWGTVDCTTAACQVGLSDAAGNGPEGVAISFN.

The first 34 residues, 1-34, serve as a signal peptide directing secretion; it reads MVPISIIRNRVAKVAVGSAAVLGLAVGFQTPAVA. 2 disulfide bridges follow: cysteine 71/cysteine 81 and cysteine 122/cysteine 127.

Belongs to the neocarzinostatin family.

Functionally, NCS has antibiotic activity (for Gram-positive bacteria) and antitumor activity (for certain mouse tumors). NCS binds non-covalently to a chromophore which is the cytotoxic and mutagenic component of the antibiotic. The chromophore binds to DNA as a weak intercalator and causes single- and double-strand breaks. This is Neocarzinostatin (ncsA) from Streptomyces carzinostaticus.